The following is a 498-amino-acid chain: Minor fimbrium subunit Mfa1 (498 aa).

A signal peptide spans M1–S19. Residue C20 is the site of N-palmitoyl cysteine attachment. A lipid anchor (S-diacylglycerol cysteine) is attached at C20. A propeptide spanning residues C20 to R50 is cleaved from the precursor. The disordered stretch occupies residues S436 to Q476.

This sequence belongs to the bacteroidetes fimbrillin superfamily. FimA/Mfa1 family. In terms of assembly, structural component of the fimbrial stalk. Minor fimbriae are composed of a structural subunit, such as the 53 kDa fimbrillin, and the accessory subunits Mfa3, Mfa4 and Mfa5. Fimbrium assembly occurs by linear, head-to-tail oligomerization of fimbrial subunits. This is mediated via insertion of a C-terminal beta-strand from one subunit into a groove in the N-terminal domain of the following subunit.

The protein localises to the fimbrium. It is found in the cell outer membrane. Its function is as follows. Structural subunit of the minor fimbriae. These filamentous pili are attached to the cell surface; they mediate biofilm formation, adhesion onto host cells and onto other bacteria that are part of the oral microbiome. They play an important role in invasion of periodontal tissues and are recognized as major virulence factors. Mfa1 orthologs from different strains have highly divergent sequences, and this correlates with pathogenicity. This is Minor fimbrium subunit Mfa1 from Porphyromonas gingivalis (Bacteroides gingivalis).